We begin with the raw amino-acid sequence, 210 residues long: Glutathione S-transferase P 2 (210 aa).

One can recognise a GST N-terminal domain in the interval 1–82 (SGYTLTYFPL…LLARYGLSGS (82 aa)). Glutathione-binding positions include Tyr-7, Arg-13, Trp-38, Lys-46, 53 to 54 (QI), and 66 to 67 (QS). The 122-residue stretch at 83–204 (NEREIAINEM…KSEGRKRRPI (122 aa)) folds into the GST C-terminal domain.

This sequence belongs to the GST superfamily. Pi family. In terms of assembly, homodimer. As to expression, liver, kidney, muscle, skin, lung and ovary.

The enzyme catalyses RX + glutathione = an S-substituted glutathione + a halide anion + H(+). Conjugation of reduced glutathione to a wide number of exogenous and endogenous hydrophobic electrophiles. This is Glutathione S-transferase P 2 from Bufo bufo (European toad).